We begin with the raw amino-acid sequence, 195 residues long: Probable cobalt-precorrin-6B C(15)-methyltransferase (decarboxylating) (195 aa).

S-adenosyl-L-methionine-binding positions include T24, 48 to 52 (GCGTG), D72, and A101.

It belongs to the methyltransferase superfamily. Archaeal-type CbiT family.

It catalyses the reaction Co-precorrin-6B + S-adenosyl-L-methionine = Co-precorrin-7 + S-adenosyl-L-homocysteine + CO2. The protein operates within cofactor biosynthesis; adenosylcobalamin biosynthesis; cob(II)yrinate a,c-diamide from sirohydrochlorin (anaerobic route): step 8/10. In terms of biological role, catalyzes the methylation of C-15 in cobalt-precorrin-6B followed by the decarboxylation of C-12 to form cobalt-precorrin-7. The chain is Probable cobalt-precorrin-6B C(15)-methyltransferase (decarboxylating) from Pyrobaculum calidifontis (strain DSM 21063 / JCM 11548 / VA1).